The chain runs to 291 residues: tRNA-cytidine(32) 2-sulfurtransferase (291 aa).

The PP-loop motif signature appears at 36–41; the sequence is SGGKDS. Positions 111, 114, and 202 each coordinate [4Fe-4S] cluster. A disordered region spans residues 259-291; sequence DPWLDAEDEEAEDCGEPSAGDGVVSLGGARGGR. Residues 262-273 are compositionally biased toward acidic residues; it reads LDAEDEEAEDCG.

This sequence belongs to the TtcA family. Homodimer. The cofactor is Mg(2+). Requires [4Fe-4S] cluster as cofactor.

Its subcellular location is the cytoplasm. It catalyses the reaction cytidine(32) in tRNA + S-sulfanyl-L-cysteinyl-[cysteine desulfurase] + AH2 + ATP = 2-thiocytidine(32) in tRNA + L-cysteinyl-[cysteine desulfurase] + A + AMP + diphosphate + H(+). It functions in the pathway tRNA modification. Its function is as follows. Catalyzes the ATP-dependent 2-thiolation of cytidine in position 32 of tRNA, to form 2-thiocytidine (s(2)C32). The sulfur atoms are provided by the cysteine/cysteine desulfurase (IscS) system. This chain is tRNA-cytidine(32) 2-sulfurtransferase, found in Anaeromyxobacter sp. (strain K).